A 307-amino-acid polypeptide reads, in one-letter code: UDP-3-O-acyl-N-acetylglucosamine deacetylase (307 aa).

Residues histidine 78, histidine 241, and aspartate 245 each contribute to the Zn(2+) site. Histidine 268 (proton donor) is an active-site residue.

Belongs to the LpxC family. It depends on Zn(2+) as a cofactor.

It catalyses the reaction a UDP-3-O-[(3R)-3-hydroxyacyl]-N-acetyl-alpha-D-glucosamine + H2O = a UDP-3-O-[(3R)-3-hydroxyacyl]-alpha-D-glucosamine + acetate. Its pathway is glycolipid biosynthesis; lipid IV(A) biosynthesis; lipid IV(A) from (3R)-3-hydroxytetradecanoyl-[acyl-carrier-protein] and UDP-N-acetyl-alpha-D-glucosamine: step 2/6. Its function is as follows. Catalyzes the hydrolysis of UDP-3-O-myristoyl-N-acetylglucosamine to form UDP-3-O-myristoylglucosamine and acetate, the committed step in lipid A biosynthesis. The sequence is that of UDP-3-O-acyl-N-acetylglucosamine deacetylase from Bordetella bronchiseptica (strain ATCC BAA-588 / NCTC 13252 / RB50) (Alcaligenes bronchisepticus).